A 128-amino-acid chain; its full sequence is Keratin-associated protein 2-3 (128 aa).

Residues 5 to 112 (CCGSTLSSLS…SVQSPCCRPP (108 aa)) are 10 X 5 AA repeats of C-C-[CDPQRWG]-[APRS]-[CIPSTVD].

This sequence belongs to the KRTAP type 2 family. In terms of assembly, interacts with hair keratins.

In the hair cortex, hair keratin intermediate filaments are embedded in an interfilamentous matrix, consisting of hair keratin-associated proteins (KRTAP), which are essential for the formation of a rigid and resistant hair shaft through their extensive disulfide bond cross-linking with abundant cysteine residues of hair keratins. The matrix proteins include the high-sulfur and high-glycine-tyrosine keratins. In Homo sapiens (Human), this protein is Keratin-associated protein 2-3 (KRTAP2-3).